Reading from the N-terminus, the 234-residue chain is Ribonuclease Trv (234 aa).

Intrachain disulfides connect Cys5-Cys24, Cys13-Cys59, Cys23-Cys125, Cys67-Cys117, and Cys189-Cys224. N-linked (GlcNAc...) asparagine glycosylation is present at Asn15. The active site involves His52. N-linked (GlcNAc...) asparagine glycosylation is present at Asn75. Active-site residues include Glu110 and His114.

It belongs to the RNase T2 family.

It carries out the reaction a ribonucleotidyl-ribonucleotide-RNA + H2O = a 3'-end 3'-phospho-ribonucleotide-RNA + a 5'-end dephospho-ribonucleoside-RNA + H(+). This is a base non-specific and adenylic acid preferential ribonuclease. This chain is Ribonuclease Trv, found in Hypocrea rufa (Trichoderma viride).